The following is a 433-amino-acid chain: Glutamate-1-semialdehyde 2,1-aminomutase (433 aa).

The residue at position 271 (lysine 271) is an N6-(pyridoxal phosphate)lysine.

Belongs to the class-III pyridoxal-phosphate-dependent aminotransferase family. HemL subfamily. Homodimer. It depends on pyridoxal 5'-phosphate as a cofactor.

The protein localises to the cytoplasm. It catalyses the reaction (S)-4-amino-5-oxopentanoate = 5-aminolevulinate. The protein operates within porphyrin-containing compound metabolism; protoporphyrin-IX biosynthesis; 5-aminolevulinate from L-glutamyl-tRNA(Glu): step 2/2. It participates in porphyrin-containing compound metabolism; chlorophyll biosynthesis. This Prochlorococcus marinus (strain MIT 9215) protein is Glutamate-1-semialdehyde 2,1-aminomutase.